Reading from the N-terminus, the 256-residue chain is Thiazole synthase (256 aa).

The active-site Schiff-base intermediate with DXP is the Lys-96. 1-deoxy-D-xylulose 5-phosphate-binding positions include Gly-157, Ala-183–Gly-184, and Asn-205–Thr-206.

The protein belongs to the ThiG family. Homotetramer. Forms heterodimers with either ThiH or ThiS.

It is found in the cytoplasm. It catalyses the reaction [ThiS sulfur-carrier protein]-C-terminal-Gly-aminoethanethioate + 2-iminoacetate + 1-deoxy-D-xylulose 5-phosphate = [ThiS sulfur-carrier protein]-C-terminal Gly-Gly + 2-[(2R,5Z)-2-carboxy-4-methylthiazol-5(2H)-ylidene]ethyl phosphate + 2 H2O + H(+). The protein operates within cofactor biosynthesis; thiamine diphosphate biosynthesis. Functionally, catalyzes the rearrangement of 1-deoxy-D-xylulose 5-phosphate (DXP) to produce the thiazole phosphate moiety of thiamine. Sulfur is provided by the thiocarboxylate moiety of the carrier protein ThiS. In vitro, sulfur can be provided by H(2)S. This Bacillus cereus (strain ATCC 10987 / NRS 248) protein is Thiazole synthase.